Reading from the N-terminus, the 639-residue chain is Chaperone protein DnaK (639 aa).

Thr195 is modified (phosphothreonine; by autocatalysis). Residues Asn601–Gln618 show a composition bias toward low complexity. Residues Asn601–Lys639 are disordered. Positions Val627–Lys639 are enriched in acidic residues.

This sequence belongs to the heat shock protein 70 family.

Its function is as follows. Acts as a chaperone. The sequence is that of Chaperone protein DnaK from Acidobacterium capsulatum (strain ATCC 51196 / DSM 11244 / BCRC 80197 / JCM 7670 / NBRC 15755 / NCIMB 13165 / 161).